The following is a 314-amino-acid chain: 3'-5' exoribonuclease YhaM (314 aa).

Positions 163 to 279 (HVVSMLDLAK…LHYIDNLDAK (117 aa)) constitute an HD domain.

The protein belongs to the YhaM family.

Its function is as follows. Shows a 3'-5' exoribonuclease activity. The polypeptide is 3'-5' exoribonuclease YhaM (Bacillus cereus (strain AH187)).